The following is a 671-amino-acid chain: TOM1-like protein 6 (671 aa).

Ala2 is subject to N-acetylalanine. The VHS domain occupies 15 to 144 (ATSDLLLGPD…ELRRSGVEFP (130 aa)). Residue Ser147 is modified to Phosphoserine. Positions 229-317 (EVEGLSLSSI…LLAKHDAIAS (89 aa)) constitute a GAT domain. 2 disordered regions span residues 320–620 (PLPV…VGQK) and 636–671 (GSADGKHNKPANSSNGSQNLSGSQTQQSMIGGRKMI). The segment covering 334 to 362 (ASKPADSSPKSSEAKDSSSIAGSSSPIPA) has biased composition (low complexity). Residues 372–382 (DEEYEEEEDEF) are compositionally biased toward acidic residues. Residues 395 to 405 (SVTTDPTSLES) are compositionally biased toward polar residues. Over residues 407-417 (NAASNALALAL) the composition is skewed to low complexity. Pro residues predominate over residues 444–459 (STPPAPSSQPSPPPPA). Low complexity predominate over residues 483-554 (AQQQQPQQPQ…QPSTRPQNPY (72 aa)). Polar residues-rich tracts occupy residues 562-598 (ASTSANAYYTPRANASASYTDTSALAGRSLQQSNSFP) and 605-616 (QATSTASNSGVS). The residue at position 596 (Ser596) is a Phosphoserine. Positions 647-663 (NSSNGSQNLSGSQTQQS) are enriched in low complexity.

This sequence belongs to the TOM1 family. Ubiquitously expressed.

The protein localises to the endosome. It is found in the multivesicular body. The protein resides in the cytoplasm. Its subcellular location is the early endosome membrane. Its function is as follows. Acts as a gatekeeper for degradative protein sorting to the vacuole. Plays a role in recognition of ubiquitinated PIN2 auxin carrier at the plasma membrane and further to its endocytic sorting. Binds ubiquitin in vitro. Might contribute to the loading of the ESCRT machinery. The protein is TOM1-like protein 6 of Arabidopsis thaliana (Mouse-ear cress).